Here is a 502-residue protein sequence, read N- to C-terminus: MKIGFDHEKYIEEQSKYILERVNNYDKLYLEFGGKLLYDLHAKRVLPGFDENAKIKLLHKLKEKVEIIICVYAGDIERNKIRGDFGITYDVDVLRLIDDLRSYDLQVNSVVITRYSGQPSTTVFINKLERRGIKVYKHEATKGYPADVDTIVSDEGYGKNPYIETTKPIVVVTAPGPGSGKLATCLSQLYHEYKQGKVAGYSKFETFPVWNVPLKHPLNIAYEAATVDLKDVNMIDSFHFDAYNEVAVNYNRDIESFPLLKRIIEKITGEESGYKSPTDMGVNRVGYGIIDDEVVKKASEQEIIRRYFKTGCEYKKGYLDKETLHRSKIIMHELNLKEDDRKVVMPAREYSAKLKKRYNKNEVYPVVALELEDGKVLTGRNSDVMDGTAAVILNAVKYLANISDEIHLISPVILEPIINLKLKTLGSKSTALTCEEILIALSICAVTNPTAQVAMEKLSMLRGCQAHSTTILSGNEEQTFRKLGIDITCDPEYPSESLYYNN.

The protein belongs to the UPF0371 family.

The protein is UPF0371 protein CTC_00401 of Clostridium tetani (strain Massachusetts / E88).